Reading from the N-terminus, the 273-residue chain is Dermonecrotic toxin LhSicTox-alphaIA2bii (273 aa).

His5 is an active-site residue. The Mg(2+) site is built by Glu25 and Asp27. His41 acts as the Nucleophile in catalysis. 2 disulfides stabilise this stretch: Cys45/Cys51 and Cys47/Cys190. Asp85 contacts Mg(2+).

Belongs to the arthropod phospholipase D family. Class II subfamily. Mg(2+) is required as a cofactor. As to expression, expressed by the venom gland.

The protein resides in the secreted. The catalysed reaction is an N-(acyl)-sphingosylphosphocholine = an N-(acyl)-sphingosyl-1,3-cyclic phosphate + choline. It catalyses the reaction an N-(acyl)-sphingosylphosphoethanolamine = an N-(acyl)-sphingosyl-1,3-cyclic phosphate + ethanolamine. The enzyme catalyses a 1-acyl-sn-glycero-3-phosphocholine = a 1-acyl-sn-glycero-2,3-cyclic phosphate + choline. It carries out the reaction a 1-acyl-sn-glycero-3-phosphoethanolamine = a 1-acyl-sn-glycero-2,3-cyclic phosphate + ethanolamine. Dermonecrotic toxins cleave the phosphodiester linkage between the phosphate and headgroup of certain phospholipids (sphingolipid and lysolipid substrates), forming an alcohol (often choline) and a cyclic phosphate. This toxin acts on sphingomyelin (SM). It may also act on ceramide phosphoethanolamine (CPE), lysophosphatidylcholine (LPC) and lysophosphatidylethanolamine (LPE), but not on lysophosphatidylserine (LPS), and lysophosphatidylglycerol (LPG). It acts by transphosphatidylation, releasing exclusively cyclic phosphate products as second products. Induces dermonecrosis, hemolysis, increased vascular permeability, edema, inflammatory response, and platelet aggregation. This chain is Dermonecrotic toxin LhSicTox-alphaIA2bii, found in Loxosceles hirsuta (Recluse spider).